Reading from the N-terminus, the 1169-residue chain is MRLEKLKIAGFKSFVDPTTLPLPGNLVGVVGPNGCGKSNVIDAVRWVMGESSARHLRGETMADVIFNGSSTRKPASQASVELVFDNSSGRAGGEYARYQQIAIRRQVARDGQSSYFLNGTRCRRKDITDLFLGTGLGARSYAIIEQGTISRLIEAKPEEMREIIEEAAGISKYKERRHETEQRMRHTRENLERLADLREELGRQLGHLQRQARKAEKFIALRDEERRLKLELLGLRWRALERQLDRLKAELTDSEERFRRLTGEEHACETQLEGLNRLRGVAQEKLDVQQGRFYELGAEISRLDQFIRHTQKSRAELVQERERVEAELRKVESDRDDDRLRLEAVRAEAAELKGKLASLEQEVAEAVSVRQAAEAKLKTCREGWEALAGDRHRLEGQAALQRSRLQQLREHGQQLGGRRQRLLQQQSELEKALAALDVQAHRLEVAGIEAEREETVGAVEALAREAERQRDRLRFARERLNPARAGLHAVQGKVASLETLQRHAMGRDRSAAAAVLEAWQLSAADRLGEKIEVAPGWENAVETVLGAHLEAVCVDSLAPYLANLQAQEPAEFLALCEYRQGPVAEGTGGPRLLDYIRAPLALEGLLAGIYCASDPAEAAERARSLQPHESVVTPGGFRIGKGWVLAQKPDAGHAGALARERELRECRRRVEELEAQCRILEREASEAEVELERLESEGREARKKADELSAGLSLARSELAAAEARSEQWRHRLDQLSHELNELADQELELAEKRAEAEEALQTAERDSLRLQDVAAQRKGEWLALEEAFAAAEAAEKSLHEEVRALRSRAAMLESNAALTAAHLQRLEQQHGQTADRLAAIVQRLAESQTPLEDERSRLDALTEERGVLEAEMARQRRRLSELEADVRRVAGERQRAEHELAALRESIGQMKLAWQTAEVRRQGIEEQFAELGAAPAAVVAGLPEDAEESAWQASVIRLGEEIERLGPVNLTAMQEYQEQEARQRYLEEQDRDLTESLATLEQAIEKIDRECRARFKETFEKINAGFQRMFPKLFGGGKAALELTENNLLSAGVSVMAQPPGKRNSSIHLLSGGEKALTAAALVFAIFELNPAPFCLLDEVDAPLDDANVGRFSQLVKEMSEKVQFLFITHNKATMEIAQYLAGVTMREPGVSRIVTVDIDAAVELASV.

32–39 serves as a coordination point for ATP; sequence PNGCGKSN. Coiled coils occupy residues 170–265 and 307–481; these read ISKY…TGEE and IRHT…ERLN. The SMC hinge domain maps to 525 to 620; that stretch reads DRLGEKIEVA…CASDPAEAAE (96 aa). 2 coiled-coil regions span residues 656–914 and 985–1014; these read ALAR…MKLA and RYLE…ECRA.

Belongs to the SMC family. As to quaternary structure, homodimer.

It is found in the cytoplasm. Functionally, required for chromosome condensation and partitioning. The chain is Chromosome partition protein Smc from Methylococcus capsulatus (strain ATCC 33009 / NCIMB 11132 / Bath).